Here is a 218-residue protein sequence, read N- to C-terminus: 2-C-methyl-D-erythritol 4-phosphate cytidylyltransferase (218 aa).

It belongs to the IspD/TarI cytidylyltransferase family. IspD subfamily.

The catalysed reaction is 2-C-methyl-D-erythritol 4-phosphate + CTP + H(+) = 4-CDP-2-C-methyl-D-erythritol + diphosphate. Its pathway is isoprenoid biosynthesis; isopentenyl diphosphate biosynthesis via DXP pathway; isopentenyl diphosphate from 1-deoxy-D-xylulose 5-phosphate: step 2/6. Its function is as follows. Catalyzes the formation of 4-diphosphocytidyl-2-C-methyl-D-erythritol from CTP and 2-C-methyl-D-erythritol 4-phosphate (MEP). The protein is 2-C-methyl-D-erythritol 4-phosphate cytidylyltransferase of Chlamydia muridarum (strain MoPn / Nigg).